Reading from the N-terminus, the 44-residue chain is Unknown protein 9 (44 aa).

This is Unknown protein 9 from Pseudotsuga menziesii (Douglas-fir).